The primary structure comprises 295 residues: CRISPR-associated endonuclease Cas1 2 (295 aa).

Residues glutamate 155, histidine 215, and glutamate 230 each contribute to the Mn(2+) site.

The protein belongs to the CRISPR-associated endonuclease Cas1 family. As to quaternary structure, homodimer, forms a heterotetramer with a Cas2 homodimer. Mg(2+) is required as a cofactor. The cofactor is Mn(2+).

In terms of biological role, CRISPR (clustered regularly interspaced short palindromic repeat), is an adaptive immune system that provides protection against mobile genetic elements (viruses, transposable elements and conjugative plasmids). CRISPR clusters contain spacers, sequences complementary to antecedent mobile elements, and target invading nucleic acids. CRISPR clusters are transcribed and processed into CRISPR RNA (crRNA). Acts as a dsDNA endonuclease. Involved in the integration of spacer DNA into the CRISPR cassette. This Pyrobaculum aerophilum (strain ATCC 51768 / DSM 7523 / JCM 9630 / CIP 104966 / NBRC 100827 / IM2) protein is CRISPR-associated endonuclease Cas1 2.